Consider the following 304-residue polypeptide: MRINHNIAALNTLNRLSSNNSASQKNMEKLSSGLRINRAGDDAAGLAISEKMRGQIRGLEMASKNSQDGISLIQTAEGALTETHAILQRVRELVVQAGNTGTQDKATDLQSIQDEISALTDEIDGISNRTEFNGKKLLDGTYKVDTATPANQKNLVFQIGANATQQISVNIEDMGADALGIKEADGSIAALHSVNDLDVTKFADNAADTADIGFDAQLKVVDEAINQVSSQRAKLGAVQNRLEHTINNLSASGENLTAAESRIRDVDMAKEMSEFTKNNILSQASQAMLAQANQQPQNVLQLLR.

Belongs to the bacterial flagellin family. As to quaternary structure, interacts with FliW in a 1:1 complex. Forms a 3-way complex of Hag, FliS and FliW, in which Flis and FliW do not directly interact.

The protein localises to the secreted. Its subcellular location is the bacterial flagellum. The protein resides in the cell wall. Functionally, flagellin is the subunit which polymerizes to form the filaments of bacterial flagella. Assembly into flagella requires FliW. Acts as a homeostatic autoinhibitory regulator to control its own cytoplasmic levels. Partner switching by flagellin between FliW and CsrA provides a flagellar assembly checkpoint to tightly control the timing of flagellin synthesis. Flagellin binds to assembly factor FliW, freeing translation regulator CsrA to repress translation of the flagellin mRNA. When the flagellar hook is assembled flagellin is secreted, depleting intracellular flagellin, which frees FliW to interact with CsrA. This derepresses flagellin translation and provides protein for flagellar assembly. Once the flagellar filament is completed cytoplasmic flagellin levels rise and CsrA translation repression of flagellin reinitiates. The sequence is that of Flagellin from Bacillus subtilis (strain 168).